The chain runs to 99 residues: uncharacterized protein (99 aa).

A signal peptide spans 1–17 (MMMNSFFPAMALMVLVG). Cys18 carries N-palmitoyl cysteine lipidation. A lipid anchor (S-diacylglycerol cysteine) is attached at Cys18.

It is found in the cell membrane. This is an uncharacterized protein from Escherichia coli O157:H7.